The following is a 2194-amino-acid chain: Supervillin (2194 aa).

Residues 1–174 (MKRKERIARR…SSYSRTELSG (174 aa)) are interaction with MYLK. Disordered regions lie at residues 35–98 (LEED…TQSL), 118–335 (EKYG…QRRH), 388–414 (PESISEGSWVGPAPQTVTKPPPSKVLE), 450–500 (EDRG…TERM), 513–563 (AVSQ…QTSK), 589–667 (RASR…KVDE), 685–719 (KSFDEKSVPKRRSRNAAVEQRLRRLQDRSHTQPVT), and 739–791 (HPVM…DSST). Phosphoserine is present on S50. Positions 87 to 98 (PYSSGIMDTQSL) are enriched in polar residues. Basic and acidic residues-rich tracts occupy residues 139–161 (SRKDPEAAEKRGVRSERSAESSR) and 181–192 (ESKDYGLHRSDG). Phosphoserine is present on residues S245 and S262. 2 stretches are compositionally biased toward basic and acidic residues: residues 283-294 (PKHEWFLQKDSE) and 308-319 (KVREKLVREESA). Positions 320–330 (RSSPELTSESL) are enriched in polar residues. A phosphoserine mark is found at S321 and S322. Polar residues predominate over residues 455–467 (GRSQEAPSGTEDL). Positions 540–551 (PPQLQALKAKAP) are enriched in low complexity. 2 stretches are compositionally biased toward basic and acidic residues: residues 592-615 (RKPELHSRVEGSSEGPGVERERGS) and 626-635 (ENRKTSERFR). Residues S652 and S686 each carry the phosphoserine modification. The span at 704 to 714 (QRLRRLQDRSH) shows a compositional bias: basic and acidic residues. Phosphoserine is present on residues S747 and S781. A compositionally biased stretch (basic and acidic residues) spans 770 to 782 (LARDQTNESKDSA). The residue at position 829 (Y829) is a Phosphotyrosine. T831 bears the Phosphothreonine mark. A phosphoserine mark is found at S893, S899, S903, S947, S979, and S1031. Residues 1036–1077 (EFGEPTSEQTGAAAGKPAAPTATPVSWKPQDPSEQPQEKRYQ) are disordered. The segment covering 1045 to 1059 (TGAAAGKPAAPTATP) has biased composition (low complexity). Residues S1099 and S1205 each carry the phosphoserine modification. Phosphothreonine is present on T1210. Residues S1214, S1302, and S1385 each carry the phosphoserine modification. An interaction with NEB region spans residues 1399–1667 (SNVSLRSVNL…KFLDWTELKR (269 aa)). 5 Gelsolin-like repeats span residues 1421–1520 (KKLM…LGGQ), 1540–1662 (IETN…FLDW), 1732–1842 (ISVD…FQGG), 1861–1962 (WRLY…LGRR), and 1995–2102 (ATEF…FPSW). The HP domain maps to 2131 to 2194 (KLCKTIYPLA…VNLKKAKGLF (64 aa)).

The protein belongs to the villin/gelsolin family. As to quaternary structure, associates with F-actin. Interacts with NEB. Interacts with MYH9. Interacts with MYLK. Interacts with TASOR. In terms of assembly, interacts with TRIP6 and DYNLT1. Interacts with KIF14; at midbody during cytokinesis.

Its subcellular location is the cell membrane. It is found in the cytoplasm. It localises to the cytoskeleton. The protein resides in the cell projection. The protein localises to the invadopodium. Its subcellular location is the podosome. It is found in the midbody. It localises to the cleavage furrow. In terms of biological role, forms a high-affinity link between the actin cytoskeleton and the membrane. Is among the first costameric proteins to assemble during myogenesis and it contributes to myogenic membrane structure and differentiation. Appears to be involved in myosin II assembly. May modulate myosin II regulation through MLCK during cell spreading, an initial step in cell migration. May play a role in invadopodial function. May be involved in modulation of focal adhesions. Supervillin-mediated down-regulation of focal adhesions involves binding to TRIP6. Plays a role in cytokinesis through KIF14 interaction. This chain is Supervillin, found in Bos taurus (Bovine).